The chain runs to 288 residues: Ribosomal RNA small subunit methyltransferase I (288 aa).

It belongs to the methyltransferase superfamily. RsmI family.

Its subcellular location is the cytoplasm. The enzyme catalyses cytidine(1402) in 16S rRNA + S-adenosyl-L-methionine = 2'-O-methylcytidine(1402) in 16S rRNA + S-adenosyl-L-homocysteine + H(+). Catalyzes the 2'-O-methylation of the ribose of cytidine 1402 (C1402) in 16S rRNA. The protein is Ribosomal RNA small subunit methyltransferase I of Vibrio cholerae serotype O1 (strain ATCC 39315 / El Tor Inaba N16961).